The chain runs to 441 residues: Malate dehydrogenase [NADP], chloroplastic (441 aa).

The N-terminal 51 residues, 1–51 (MAVAELSPSYKTQLKTCQQLSSSLSTRLSDHRKFSLRLLPRPVSVRGGIRC), are a transit peptide targeting the chloroplast. Residues cysteine 75 and cysteine 80 are joined by a disulfide bond. Residue 104–110 (GAAGMIS) participates in NADP(+) binding. Substrate contacts are provided by arginine 185 and arginine 191. Asparagine 198 lines the NADP(+) pocket. Glutamine 205 contacts NAD(+). 222-224 (VGN) provides a ligand contact to NADP(+). Residues asparagine 224 and arginine 255 each contribute to the substrate site. The active-site Proton acceptor is histidine 280. A disulfide bond links cysteine 416 and cysteine 428.

Belongs to the LDH/MDH superfamily. MDH type 2 family. As to quaternary structure, homodimer.

The protein localises to the plastid. Its subcellular location is the chloroplast. It carries out the reaction (S)-malate + NADP(+) = oxaloacetate + NADPH + H(+). Chloroplast NADP-MDH is activated upon illumination. In order to be enzymatically active, disulfide bridges on the protein must be reduced by thioredoxin which receives electrons from ferredoxin and the electron transport system of photosynthesis. The chloroplastic, NADP-dependent form is essential for the photosynthesis C4 cycle, which allows plants to circumvent the problem of photorespiration. In C4 plants, NADP-MDH activity acts to convert oxaloacetate to malate in chloroplasts of mesophyll cells for transport to the bundle sheath cells. This Mesembryanthemum crystallinum (Common ice plant) protein is Malate dehydrogenase [NADP], chloroplastic (MDH1).